The chain runs to 979 residues: MPTPVTTARECLTEEAARALDDAVVVARRRSHAQTTSLHAVSALLAMPSSILREVCVSRAARSVPYSSRLQFRALELCVGVSLDRLPSSKSPATEEDPPVSNSLMAAIKRSQANQRRHPESYHLQQIHASNNGGGGCQTTVLKVELKYFILSILDDPIVNRVFGEAGFRSSEIKLDVLHPPVTQLSSRFSRGRCPPLFLCNLPNSDPNREFPFSGSSGFDENSRRIGEVLGRKDKKNPLLIGNCANEALKTFTDSINSGKLGFLQMDISGLSLISIEKEISEILADGSKNEEEIRMKVDDLGRTVEQSGSKSGIVLNLGELKVLTSEANAALEILVSKLSDLLKHESKQLSFIGCVSSNETYTKLIDRFPTIEKDWDLHVLPITASTKPSTQGVYPKSSLMGSFVPFGGFFSSTSNFRVPLSSTVNQTLSRCHLCNEKYLQEVAAVLKAGSSLSLADKCSEKLAPWLRAIETKEDKGITGSSKALDDANTSASQTAALQKKWDNICQSIHHTPAFPKLGFQSVSPQFPVQTEKSVRTPTSYLETPKLLNPPISKPKPMEDLTASVTNRTVSLPLSCVTTDFGLGVIYASKNQESKTTREKPMLVTLNSSLEHTYQKDFKSLREILSRKVAWQTEAVNAISQIICGCKTDSTRRNQASGIWLALLGPDKVGKKKVAMTLSEVFFGGKVNYICVDFGAEHCSLDDKFRGKTVVDYVTGELSRKPHSVVLLENVEKAEFPDQMRLSEAVSTGKIRDLHGRVISMKNVIVVVTSGIAKDNATDHVIKPVKFPEEQVLSARSWKLQIKLGDATKFGVNKRKYELETAQRAVKVQRSYLDLNLPVNETEFSPDHEAEDRDAWFDEFIEKVDGKVTFKPVDFDELAKNIQEKIGSHFERCFGSETHLELDKEVILQILAASWSSLSSGEEEGRTIVDQWMQTVLARSFAEAKQKYGSNPMLGVKLVASSSGLASGVELPAKVDVIW.

The Clp R domain maps to 8-190 (ARECLTEEAA…PVTQLSSRFS (183 aa)). Repeat regions lie at residues 12 to 86 (LTEE…LDRL) and 100 to 190 (VSNS…SRFS). Positions 833-837 (LDLNL) match the EAR motif.

This sequence belongs to the ClpA/ClpB family. In terms of assembly, interacts with TPL/TPR in an EAR-motif dependent manner. Interacts with TPR3. Interacts with MAX2 and TPR2. Interacts with D14. The interaction with D14 occurs in the presence of (2'R) stereoisomers of strigolactones, but not (2'S) stereoisomers. In terms of processing, ubiquitinated upon strigolactone treatment. Probable proteolytic target of SCF(MAX2)-mediated stigolactone signaling. Detected in roots, seedlings and axillary branches. Expressed in the primary rosette buds and expanding leaves of adult rosettes, the vasculature of the hypocotyls, cotyledons, and mature roots, and in the midvein and petioles of young leaves.

It localises to the nucleus. Functionally, probable component of a transcriptional corepressor complex involved in branching control. Regulates cotyledon expansion and lateral root growth, but not germination or hypocotyl elongation. Promotes auxin transport and PIN1 accumulation in the stem and represses BRC1/TCP18 expression in axillary buds. This is Protein SMAX1-LIKE 6 from Arabidopsis thaliana (Mouse-ear cress).